The primary structure comprises 497 residues: Ankyrin repeat domain-containing protein 53 (497 aa).

The span at 1–10 (MRRPSRRRSK) shows a compositional bias: basic residues. The tract at residues 1-65 (MRRPSRRRSK…VSSPNSESSQ (65 aa)) is disordered. The segment covering 12-27 (STPPRSHTTPRRTGPS) has biased composition (low complexity). Over residues 28–39 (DSRRRPGTKEQP) the composition is skewed to basic and acidic residues. ANK repeat units lie at residues 110-140 (KGFTAIHFAAQKCQLSCLKVLIEEYKYPVDL), 144-177 (KGQTPLHLVIHKNNKSDILPCIDYLLKKGAAINS), and 181-210 (NGSTPLHLASCNGLLGCIKLLVQSGANVHA). The stretch at 239–264 (WKHDKKVLAQEMEKLRTLKEKLTILE) forms a coiled coil.

In terms of assembly, interacts with PSRC1; recruited by PSRC1 to the spindle during mitosis. Phosphorylated during mitosis.

The protein localises to the cytoplasm. The protein resides in the cytoskeleton. Its subcellular location is the spindle. It is found in the spindle pole. Its function is as follows. Required for normal progression through mitosis. Involved in chromosome alignment and cytokinesis via regulation of microtubules polymerization. In Mus musculus (Mouse), this protein is Ankyrin repeat domain-containing protein 53 (Ankrd53).